Here is an 87-residue protein sequence, read N- to C-terminus: MAKEELLEMQGVVNDVLPDTRFRVTLENGHELIAYTSGKMKKNHIRILVGDKVTLELSPYDLSKGRITFRHIENRGTPNPQAQRRRY.

One can recognise an S1-like domain in the interval 1-72 (MAKEELLEMQ…SKGRITFRHI (72 aa)).

It belongs to the IF-1 family. In terms of assembly, component of the 30S ribosomal translation pre-initiation complex which assembles on the 30S ribosome in the order IF-2 and IF-3, IF-1 and N-formylmethionyl-tRNA(fMet); mRNA recruitment can occur at any time during PIC assembly.

Its subcellular location is the cytoplasm. Its function is as follows. One of the essential components for the initiation of protein synthesis. Stabilizes the binding of IF-2 and IF-3 on the 30S subunit to which N-formylmethionyl-tRNA(fMet) subsequently binds. Helps modulate mRNA selection, yielding the 30S pre-initiation complex (PIC). Upon addition of the 50S ribosomal subunit IF-1, IF-2 and IF-3 are released leaving the mature 70S translation initiation complex. The polypeptide is Translation initiation factor IF-1 2 (Dechloromonas aromatica (strain RCB)).